Consider the following 273-residue polypeptide: Large ribosomal subunit protein uL2 (273 aa).

Disordered stretches follow at residues 28–53 (KPFAPLLEKNSKSGGRNNNGRITTRH) and 221–273 (RGTA…RRSK). The segment covering 39–48 (KSGGRNNNGR) has biased composition (low complexity). Lys-242 carries the post-translational modification N6-acetyllysine.

Belongs to the universal ribosomal protein uL2 family. As to quaternary structure, part of the 50S ribosomal subunit. Forms a bridge to the 30S subunit in the 70S ribosome.

Functionally, one of the primary rRNA binding proteins. Required for association of the 30S and 50S subunits to form the 70S ribosome, for tRNA binding and peptide bond formation. It has been suggested to have peptidyltransferase activity; this is somewhat controversial. Makes several contacts with the 16S rRNA in the 70S ribosome. This is Large ribosomal subunit protein uL2 from Shigella dysenteriae serotype 1 (strain Sd197).